We begin with the raw amino-acid sequence, 258 residues long: Imidazole glycerol phosphate synthase subunit HisF (258 aa).

Catalysis depends on residues Asp11 and Asp130.

The protein belongs to the HisA/HisF family. As to quaternary structure, heterodimer of HisH and HisF.

It localises to the cytoplasm. The catalysed reaction is 5-[(5-phospho-1-deoxy-D-ribulos-1-ylimino)methylamino]-1-(5-phospho-beta-D-ribosyl)imidazole-4-carboxamide + L-glutamine = D-erythro-1-(imidazol-4-yl)glycerol 3-phosphate + 5-amino-1-(5-phospho-beta-D-ribosyl)imidazole-4-carboxamide + L-glutamate + H(+). It functions in the pathway amino-acid biosynthesis; L-histidine biosynthesis; L-histidine from 5-phospho-alpha-D-ribose 1-diphosphate: step 5/9. IGPS catalyzes the conversion of PRFAR and glutamine to IGP, AICAR and glutamate. The HisF subunit catalyzes the cyclization activity that produces IGP and AICAR from PRFAR using the ammonia provided by the HisH subunit. The protein is Imidazole glycerol phosphate synthase subunit HisF of Xanthomonas euvesicatoria pv. vesicatoria (strain 85-10) (Xanthomonas campestris pv. vesicatoria).